We begin with the raw amino-acid sequence, 947 residues long: Protein translocase subunit SecA (947 aa).

Residues Gln85, 103-107 (GEGKT), and Asp514 each bind ATP. The disordered stretch occupies residues 864-947 (AAPSLDKGAQ…QAKGGRRRKK (84 aa)). Residues 884-900 (PEIRAKGLDAPQRRDLH) are compositionally biased toward basic and acidic residues. Residues 934-947 (ERRKQAKGGRRRKK) show a composition bias toward basic residues.

It belongs to the SecA family. In terms of assembly, monomer and homodimer. Part of the essential Sec protein translocation apparatus which comprises SecA, SecYEG and auxiliary proteins SecDF. Other proteins may also be involved.

The protein localises to the cell membrane. Its subcellular location is the cytoplasm. It carries out the reaction ATP + H2O + cellular proteinSide 1 = ADP + phosphate + cellular proteinSide 2.. Its function is as follows. Part of the Sec protein translocase complex. Interacts with the SecYEG preprotein conducting channel. Has a central role in coupling the hydrolysis of ATP to the transfer of proteins into and across the cell membrane, serving as an ATP-driven molecular motor driving the stepwise translocation of polypeptide chains across the membrane. The sequence is that of Protein translocase subunit SecA from Streptomyces lividans.